We begin with the raw amino-acid sequence, 246 residues long: Ribonuclease 3 (246 aa).

Residues 18-147 form the RNase III domain; sequence FQELQKKIGI…FIGALYLDQG (130 aa). Glutamate 60 is a Mg(2+) binding site. Aspartate 64 is a catalytic residue. Mg(2+)-binding residues include aspartate 133 and glutamate 136. The active site involves glutamate 136. The DRBM domain maps to 173–242; the sequence is DFKSQLQELV…AQMALETLRA (70 aa).

This sequence belongs to the ribonuclease III family. Homodimer. Mg(2+) serves as cofactor.

Its subcellular location is the cytoplasm. It carries out the reaction Endonucleolytic cleavage to 5'-phosphomonoester.. In terms of biological role, digests double-stranded RNA. Involved in the processing of primary rRNA transcript to yield the immediate precursors to the large and small rRNAs (23S and 16S). Processes some mRNAs, and tRNAs when they are encoded in the rRNA operon. Processes pre-crRNA and tracrRNA of type II CRISPR loci if present in the organism. The protein is Ribonuclease 3 of Geobacillus thermodenitrificans (strain NG80-2).